Here is a 382-residue protein sequence, read N- to C-terminus: Succinyl-diaminopimelate desuccinylase (382 aa).

Residue histidine 68 participates in Zn(2+) binding. Residue aspartate 70 is part of the active site. Zn(2+) is bound at residue aspartate 101. Glutamate 135 acts as the Proton acceptor in catalysis. Glutamate 136, glutamate 164, and histidine 350 together coordinate Zn(2+).

Belongs to the peptidase M20A family. DapE subfamily. Homodimer. Zn(2+) serves as cofactor. It depends on Co(2+) as a cofactor.

The enzyme catalyses N-succinyl-(2S,6S)-2,6-diaminopimelate + H2O = (2S,6S)-2,6-diaminopimelate + succinate. Its pathway is amino-acid biosynthesis; L-lysine biosynthesis via DAP pathway; LL-2,6-diaminopimelate from (S)-tetrahydrodipicolinate (succinylase route): step 3/3. In terms of biological role, catalyzes the hydrolysis of N-succinyl-L,L-diaminopimelic acid (SDAP), forming succinate and LL-2,6-diaminopimelate (DAP), an intermediate involved in the bacterial biosynthesis of lysine and meso-diaminopimelic acid, an essential component of bacterial cell walls. In Acidithiobacillus ferrooxidans (strain ATCC 23270 / DSM 14882 / CIP 104768 / NCIMB 8455) (Ferrobacillus ferrooxidans (strain ATCC 23270)), this protein is Succinyl-diaminopimelate desuccinylase.